The sequence spans 832 residues: Disintegrin and metalloproteinase domain-containing protein 23 (832 aa).

Polar residues predominate over residues 1–10; the sequence is MKPPGSSSRQ. Residues 1–37 form a disordered region; it reads MKPPGSSSRQPPLAGCSLAGASCGPQRGPAGSVPASA. A signal peptide spans 1–59; it reads MKPPGSSSRQPPLAGCSLAGASCGPQRGPAGSVPASAPARTPPCRLLLVLLLLPPLAAS. Residues 28–37 are compositionally biased toward low complexity; the sequence is GPAGSVPASA. Residues 60 to 286 constitute a propeptide that is removed on maturation; the sequence is SRPRAWGAAA…ELQWLKRRKR (227 aa). Residues Asn-76, Asn-96, Asn-100, and Asn-263 are each glycosylated (N-linked (GlcNAc...) asparagine). Residues 287–792 are Extracellular-facing; that stretch reads AVNPSRGIFE…EGPKGPSATN (506 aa). The Peptidase M12B domain occupies 299–496; it reads KYLELMIVND…GGGACLFNRP (198 aa). 3 disulfides stabilise this stretch: Cys-408–Cys-491, Cys-450–Cys-475, and Cys-452–Cys-459. Positions 502-588 constitute a Disintegrin domain; that stretch reads PTECGNGYVE…QCPPNLHKQD (87 aa). Asn-547 and Asn-548 each carry an N-linked (GlcNAc...) asparagine glycan. Residues Cys-560 and Cys-580 are joined by a disulfide bond. The may bind the integrin receptor stretch occupies residues 563 to 568; sequence AVNECD. N-linked (GlcNAc...) asparagine glycans are attached at residues Asn-664 and Asn-732. One can recognise an EGF-like domain in the interval 732–769; the sequence is NMSSCPLDSKGKVCSGHGVCSNEATCICDFTWAGTDCS. Disulfide bonds link Cys-736-Cys-751, Cys-745-Cys-757, and Cys-759-Cys-768. Residues 793 to 813 traverse the membrane as a helical segment; that stretch reads LIIGSIAGAILVAAIVLGGTG. Topologically, residues 814-832 are cytoplasmic; it reads WGFKNVKKRRFDPTQQGPI.

Can bind to LGI1 and LGI4. Ligand for integrin alpha-V/beta-3. Highly expressed in the brain and weakly expressed in the heart. In the brain, expressed prominently in the amygdala, caudate nucleus, hypothalamus, thalamus, cerebral cortex and occipital pole.

It is found in the cell membrane. The protein resides in the secreted. May play a role in cell-cell and cell-matrix interactions. This is a non-catalytic metalloprotease-like protein. The chain is Disintegrin and metalloproteinase domain-containing protein 23 (ADAM23) from Homo sapiens (Human).